The primary structure comprises 318 residues: MNGDHMVLGSSMTDEKAIILVIILLLLCLVAIAGNCFITAALGMEWVLQRMLLPCDKLLVSLGASRFCPQWVVMGKTTYVFLYPTAFPYNPVLRFLAFQWDLLNAATLWFSTWLSVFYCVKIATFTHPVFLWLKHKLSEWVPWMLFSSVGLSSFTTILFFIGNHRVYQSYLRNHLQPWNVTGNSIWSYCEKFYLFPLKMITWTMPTAVFFICMILLITSLGRHMKKALLTNSGFRDPSVQAHIKAMLALLSFAMLFISYFLSLVFSAAGIFPPLDFKFWVWESVIYLCAAVHPIILLFSNRRLRAVLKRCRSSRCGTP.

At 1–7 (MNGDHMV) the chain is on the extracellular side. A helical transmembrane segment spans residues 8–28 (LGSSMTDEKAIILVIILLLLC). Topologically, residues 29 to 40 (LVAIAGNCFITA) are cytoplasmic. The helical transmembrane segment at 41–61 (ALGMEWVLQRMLLPCDKLLVS) threads the bilayer. The Extracellular segment spans residues 62–88 (LGASRFCPQWVVMGKTTYVFLYPTAFP). Residues 89–109 (YNPVLRFLAFQWDLLNAATLW) form a helical membrane-spanning segment. The Cytoplasmic segment spans residues 110–128 (FSTWLSVFYCVKIATFTHP). A helical membrane pass occupies residues 129-149 (VFLWLKHKLSEWVPWMLFSSV). Over 150–183 (GLSSFTTILFFIGNHRVYQSYLRNHLQPWNVTGN) the chain is Extracellular. N179 carries N-linked (GlcNAc...) asparagine glycosylation. Residues 184 to 204 (SIWSYCEKFYLFPLKMITWTM) traverse the membrane as a helical segment. At 205–234 (PTAVFFICMILLITSLGRHMKKALLTNSGF) the chain is on the cytoplasmic side. A helical membrane pass occupies residues 235–255 (RDPSVQAHIKAMLALLSFAML). Topologically, residues 256-264 (FISYFLSLV) are extracellular. A helical membrane pass occupies residues 265–285 (FSAAGIFPPLDFKFWVWESVI). Residues 286–318 (YLCAAVHPIILLFSNRRLRAVLKRCRSSRCGTP) lie on the Cytoplasmic side of the membrane.

The protein belongs to the G-protein coupled receptor T2R family.

Its subcellular location is the membrane. Functionally, receptor that may play a role in the perception of bitterness and is gustducin-linked. May play a role in sensing the chemical composition of the gastrointestinal content. The activity of this receptor may stimulate alpha gustducin, mediate PLC-beta-2 activation and lead to the gating of TRPM5. The protein is Taste receptor type 2 member 60 (TAS2R60) of Pongo pygmaeus (Bornean orangutan).